The following is a 186-amino-acid chain: Elongation factor P (186 aa).

Belongs to the elongation factor P family.

Its subcellular location is the cytoplasm. The protein operates within protein biosynthesis; polypeptide chain elongation. Involved in peptide bond synthesis. Stimulates efficient translation and peptide-bond synthesis on native or reconstituted 70S ribosomes in vitro. Probably functions indirectly by altering the affinity of the ribosome for aminoacyl-tRNA, thus increasing their reactivity as acceptors for peptidyl transferase. This is Elongation factor P from Beutenbergia cavernae (strain ATCC BAA-8 / DSM 12333 / CCUG 43141 / JCM 11478 / NBRC 16432 / NCIMB 13614 / HKI 0122).